Reading from the N-terminus, the 57-residue chain is uncharacterized protein (57 aa).

Residues phenylalanine 10–leucine 27 traverse the membrane as a helical segment. Positions lysine 28–glutamate 55 form a coiled coil.

It is found in the membrane. This is an uncharacterized protein from Schizosaccharomyces pombe (strain 972 / ATCC 24843) (Fission yeast).